A 350-amino-acid polypeptide reads, in one-letter code: Small ribosomal subunit biogenesis GTPase RsgA (350 aa).

A disordered region spans residues 1–30; that stretch reads MSKRKLTQNQQRRIQSNNAKTLHRHQHRHK. A compositionally biased stretch (polar residues) spans 7 to 20; that stretch reads TQNQQRRIQSNNAK. Positions 21–30 are enriched in basic residues; the sequence is TLHRHQHRHK. Positions 106–274 constitute a CP-type G domain; sequence HNQIVRPDYY…LIDSPGIREF (169 aa). GTP-binding positions include 162–165 and 216–224; these read NKAD and GQSGVGKSS. Zn(2+)-binding residues include Cys-298, Cys-303, His-305, and Cys-311.

It belongs to the TRAFAC class YlqF/YawG GTPase family. RsgA subfamily. Monomer. Associates with 30S ribosomal subunit, binds 16S rRNA. The cofactor is Zn(2+).

Its subcellular location is the cytoplasm. One of several proteins that assist in the late maturation steps of the functional core of the 30S ribosomal subunit. Helps release RbfA from mature subunits. May play a role in the assembly of ribosomal proteins into the subunit. Circularly permuted GTPase that catalyzes slow GTP hydrolysis, GTPase activity is stimulated by the 30S ribosomal subunit. The sequence is that of Small ribosomal subunit biogenesis GTPase RsgA from Histophilus somni (strain 129Pt) (Haemophilus somnus).